The following is a 364-amino-acid chain: Mannose-1-phosphate guanyltransferase (364 aa).

This sequence belongs to the transferase hexapeptide repeat family.

The protein localises to the cytoplasm. The catalysed reaction is alpha-D-mannose 1-phosphate + GTP + H(+) = GDP-alpha-D-mannose + diphosphate. The protein operates within nucleotide-sugar biosynthesis; GDP-alpha-D-mannose biosynthesis; GDP-alpha-D-mannose from alpha-D-mannose 1-phosphate (GTP route): step 1/1. Its function is as follows. Involved in cell wall synthesis where it is required for glycosylation. Involved in cell cycle progression through cell-size checkpoint. The chain is Mannose-1-phosphate guanyltransferase (MPG1) from Cryptococcus neoformans var. neoformans serotype D (strain B-3501A) (Filobasidiella neoformans).